Here is a 154-residue protein sequence, read N- to C-terminus: Transcriptional regulator MraZ (154 aa).

SpoVT-AbrB domains follow at residues 6–53 (NSEA…PENV) and 83–126 (VEVI…SKEI).

This sequence belongs to the MraZ family. In terms of assembly, forms oligomers.

It is found in the cytoplasm. Its subcellular location is the nucleoid. This is Transcriptional regulator MraZ from Phocaeicola vulgatus (strain ATCC 8482 / DSM 1447 / JCM 5826 / CCUG 4940 / NBRC 14291 / NCTC 11154) (Bacteroides vulgatus).